A 98-amino-acid chain; its full sequence is NADH-ubiquinone oxidoreductase chain 4L (98 aa).

Helical transmembrane passes span 1-21, 26-46, and 61-81; these read MSPV…GLAF, LLSA…AIAL, and MILL…LVAA.

It belongs to the complex I subunit 4L family.

The protein resides in the mitochondrion membrane. The catalysed reaction is a ubiquinone + NADH + 5 H(+)(in) = a ubiquinol + NAD(+) + 4 H(+)(out). Functionally, core subunit of the mitochondrial membrane respiratory chain NADH dehydrogenase (Complex I) which catalyzes electron transfer from NADH through the respiratory chain, using ubiquinone as an electron acceptor. Part of the enzyme membrane arm which is embedded in the lipid bilayer and involved in proton translocation. This Squalus acanthias (Spiny dogfish) protein is NADH-ubiquinone oxidoreductase chain 4L (MT-ND4L).